The chain runs to 280 residues: Bifunctional protein FolD (280 aa).

NADP(+) contacts are provided by residues 159–161 (GRS), Ser-184, and Ile-225.

Belongs to the tetrahydrofolate dehydrogenase/cyclohydrolase family. As to quaternary structure, homodimer.

The enzyme catalyses (6R)-5,10-methylene-5,6,7,8-tetrahydrofolate + NADP(+) = (6R)-5,10-methenyltetrahydrofolate + NADPH. The catalysed reaction is (6R)-5,10-methenyltetrahydrofolate + H2O = (6R)-10-formyltetrahydrofolate + H(+). It participates in one-carbon metabolism; tetrahydrofolate interconversion. In terms of biological role, catalyzes the oxidation of 5,10-methylenetetrahydrofolate to 5,10-methenyltetrahydrofolate and then the hydrolysis of 5,10-methenyltetrahydrofolate to 10-formyltetrahydrofolate. The polypeptide is Bifunctional protein FolD (Methanosphaerula palustris (strain ATCC BAA-1556 / DSM 19958 / E1-9c)).